A 398-amino-acid polypeptide reads, in one-letter code: Acetate kinase (398 aa).

Asn-7 is a binding site for Mg(2+). Lys-14 contacts ATP. Residue Arg-91 coordinates substrate. Catalysis depends on Asp-148, which acts as the Proton donor/acceptor. ATP-binding positions include 208 to 212, 283 to 285, and 331 to 335; these read HLGNG, DSR, and GIGEN. Glu-384 is a binding site for Mg(2+).

It belongs to the acetokinase family. In terms of assembly, homodimer. Requires Mg(2+) as cofactor. The cofactor is Mn(2+).

It localises to the cytoplasm. The enzyme catalyses acetate + ATP = acetyl phosphate + ADP. It functions in the pathway metabolic intermediate biosynthesis; acetyl-CoA biosynthesis; acetyl-CoA from acetate: step 1/2. Catalyzes the formation of acetyl phosphate from acetate and ATP. Can also catalyze the reverse reaction. The sequence is that of Acetate kinase from Halothermothrix orenii (strain H 168 / OCM 544 / DSM 9562).